The following is a 754-amino-acid chain: Fibronectin type III domain-containing protein 1 (754 aa).

A signal peptide spans 1-19 (MKSWISISFLCMLFPLSNG). Disordered stretches follow at residues 40–61 (SLQG…SQGG), 85–106 (AQIS…TQFS), and 130–163 (AQHS…AQSG). Residues 130–161 (AQHSQAGAQGSQFPQSAAHTAQHHQGTAQPAQ) are compositionally biased toward low complexity. 5 consecutive Fibronectin type-III domains span residues 250-355 (PPQS…TPDL), 359-449 (APLN…TDKF), 453-545 (APRN…TKMD), 549-642 (EPMS…LPKP), and 645-742 (LVPN…SFPG). The tract at residues 731 to 754 (SNLSSQQFSFPGQQVGQQQSNPWI) is disordered.

Prismatic layer of shell (at protein level). Expressed primarily in the mantle with highest level in the outer epithelium of the mantle edge and lower level in the mantle pallium.

Its subcellular location is the secreted. The chain is Fibronectin type III domain-containing protein 1 from Margaritifera margaritifera (Freshwater pearl mussel).